A 1223-amino-acid polypeptide reads, in one-letter code: Rho family-interacting cell polarization regulator 1 (1223 aa).

S22 carries the post-translational modification Phosphoserine. The stretch at 89–114 forms a coiled coil; sequence LTAYLEVHQQEQEKLQGQIRESKRNS. 2 positions are modified to phosphoserine: S349 and S351. The residue at position 355 (T355) is a Phosphothreonine. The tract at residues 375–411 is disordered; the sequence is NGTAWSLSSESSDDSSSPQLSGTARHSPAPRPLVQQP. A compositionally biased stretch (low complexity) spans 380 to 395; the sequence is SLSSESSDDSSSPQLS. 2 positions are modified to phosphoserine: S456 and S459. Disordered stretches follow at residues 475 to 769 and 856 to 889; these read ESLA…APQH and FLNE…SPSA. 2 stretches are compositionally biased toward low complexity: residues 505–523 and 546–564; these read GHSA…PTST and PGPT…TTTH. Positions 565–592 are enriched in polar residues; sequence SAPSPLTHTTTGSTHKPIISTLTTTGPT. Low complexity-rich tracts occupy residues 601 to 650 and 659 to 675; these read TTTS…PTPS and TSPT…TTSP. Residues 680–695 are compositionally biased toward polar residues; the sequence is VSPSTSLELATLSSPS. Over residues 858–867 the composition is skewed to acidic residues; the sequence is NEDEDEDNDV. S874 and S875 each carry phosphoserine.

The protein belongs to the RIPOR family. Interacts (via N-terminus) with RHOA (GTP-bound form); this interaction links active RHOA to STK24 and STK26 kinases. Interacts with RHOB. Interacts with RHOC. Interacts (via C-terminus) with PDCD10; this interaction occurs in a Rho-independent manner. Interacts (via C-terminus) with STK24; this interaction occurs in a PDCD10-dependent and Rho-independent manner. Interacts (via C-terminus) with STK26; this interaction occurs in a PDCD10-dependent and Rho-independent manner. Interacts (via N-terminus) with 14-3-3 proteins; these interactions occur in a Rho-dependent manner.

The protein resides in the cytoplasm. Its subcellular location is the golgi apparatus. Its function is as follows. Downstream effector protein for Rho-type small GTPases that plays a role in cell polarity and directional migration. Acts as an adapter protein, linking active Rho proteins to STK24 and STK26 kinases, and hence positively regulates Golgi reorientation in polarized cell migration upon Rho activation. Involved in the subcellular relocation of STK26 from the Golgi to cytoplasm punctae in a Rho- and PDCD10-dependent manner upon serum stimulation. The protein is Rho family-interacting cell polarization regulator 1 (RIPOR1) of Homo sapiens (Human).